We begin with the raw amino-acid sequence, 108 residues long: Phosphoribosyl-ATP pyrophosphatase (108 aa).

It belongs to the PRA-PH family.

The protein localises to the cytoplasm. It catalyses the reaction 1-(5-phospho-beta-D-ribosyl)-ATP + H2O = 1-(5-phospho-beta-D-ribosyl)-5'-AMP + diphosphate + H(+). The protein operates within amino-acid biosynthesis; L-histidine biosynthesis; L-histidine from 5-phospho-alpha-D-ribose 1-diphosphate: step 2/9. The chain is Phosphoribosyl-ATP pyrophosphatase from Chromobacterium violaceum (strain ATCC 12472 / DSM 30191 / JCM 1249 / CCUG 213 / NBRC 12614 / NCIMB 9131 / NCTC 9757 / MK).